A 274-amino-acid polypeptide reads, in one-letter code: Glutamate--cysteine ligase regulatory subunit (274 aa).

Lys-263 bears the N6-acetyllysine mark.

Belongs to the aldo/keto reductase family. Glutamate--cysteine ligase light chain subfamily. Heterodimer of a catalytic heavy chain and a regulatory light chain. In terms of tissue distribution, in all tissues examined. Highest levels in skeletal muscle.

It participates in sulfur metabolism; glutathione biosynthesis; glutathione from L-cysteine and L-glutamate: step 1/2. This Homo sapiens (Human) protein is Glutamate--cysteine ligase regulatory subunit (GCLM).